The sequence spans 150 residues: D-aminoacyl-tRNA deacylase (150 aa).

The Gly-cisPro motif, important for rejection of L-amino acids motif lies at 136 to 137; it reads GP.

The protein belongs to the DTD family. As to quaternary structure, homodimer.

Its subcellular location is the cytoplasm. It catalyses the reaction glycyl-tRNA(Ala) + H2O = tRNA(Ala) + glycine + H(+). The enzyme catalyses a D-aminoacyl-tRNA + H2O = a tRNA + a D-alpha-amino acid + H(+). An aminoacyl-tRNA editing enzyme that deacylates mischarged D-aminoacyl-tRNAs. Also deacylates mischarged glycyl-tRNA(Ala), protecting cells against glycine mischarging by AlaRS. Acts via tRNA-based rather than protein-based catalysis; rejects L-amino acids rather than detecting D-amino acids in the active site. By recycling D-aminoacyl-tRNA to D-amino acids and free tRNA molecules, this enzyme counteracts the toxicity associated with the formation of D-aminoacyl-tRNA entities in vivo and helps enforce protein L-homochirality. This Staphylococcus aureus (strain bovine RF122 / ET3-1) protein is D-aminoacyl-tRNA deacylase.